The following is a 267-amino-acid chain: 4-hydroxy-tetrahydrodipicolinate reductase (267 aa).

NAD(+)-binding positions include 8-13 (GIAGRM), glutamate 34, 98-100 (GST), and 122-125 (SPNM). The Proton donor/acceptor role is filled by histidine 155. (S)-2,3,4,5-tetrahydrodipicolinate is bound at residue histidine 156. The Proton donor role is filled by lysine 159. A (S)-2,3,4,5-tetrahydrodipicolinate-binding site is contributed by 165–166 (GT).

This sequence belongs to the DapB family.

The protein localises to the cytoplasm. It catalyses the reaction (S)-2,3,4,5-tetrahydrodipicolinate + NAD(+) + H2O = (2S,4S)-4-hydroxy-2,3,4,5-tetrahydrodipicolinate + NADH + H(+). The enzyme catalyses (S)-2,3,4,5-tetrahydrodipicolinate + NADP(+) + H2O = (2S,4S)-4-hydroxy-2,3,4,5-tetrahydrodipicolinate + NADPH + H(+). Its pathway is amino-acid biosynthesis; L-lysine biosynthesis via DAP pathway; (S)-tetrahydrodipicolinate from L-aspartate: step 4/4. Functionally, catalyzes the conversion of 4-hydroxy-tetrahydrodipicolinate (HTPA) to tetrahydrodipicolinate. The protein is 4-hydroxy-tetrahydrodipicolinate reductase of Syntrophobacter fumaroxidans (strain DSM 10017 / MPOB).